The primary structure comprises 136 residues: Small ribosomal subunit protein uS8c (136 aa).

This sequence belongs to the universal ribosomal protein uS8 family. In terms of assembly, part of the 30S ribosomal subunit.

It localises to the plastid. Its subcellular location is the chloroplast. Its function is as follows. One of the primary rRNA binding proteins, it binds directly to 16S rRNA central domain where it helps coordinate assembly of the platform of the 30S subunit. This Tetradesmus obliquus (Green alga) protein is Small ribosomal subunit protein uS8c (rps8).